The primary structure comprises 311 residues: MLQNQEISKKEKYNIDKLQKRLRRNVGEAIADFNMIEEGDRIMVCLSGGKDSYTMLEILRNLQKSAPISFSLVAVNLDQKQPGFPEHILPAYLEQLGVEYKIVEENTYGIVKEKIPEGKTTCSLCSRLRRGILYRTATELGATKIALGHHRDDILQTLFLNMFYGGKMKGMPPKLMSDDGKHIVIRPLAYCREKDIERFSQAKGFPIIPCNLCGSQPNLQRQVIADMLRDWDKRYPGRIETMFSAMQNVVPSHLSDVNLFDFKGITHGSEVVDGGDLAFDREEIPLQPAGWQPEEEDARLDELRLNVVEVK.

The short motif at serine 47–serine 52 is the PP-loop motif element. Cysteine 122, cysteine 125, and cysteine 213 together coordinate [4Fe-4S] cluster.

It belongs to the TtcA family. In terms of assembly, homodimer. Mg(2+) is required as a cofactor. It depends on [4Fe-4S] cluster as a cofactor.

The protein localises to the cytoplasm. It carries out the reaction cytidine(32) in tRNA + S-sulfanyl-L-cysteinyl-[cysteine desulfurase] + AH2 + ATP = 2-thiocytidine(32) in tRNA + L-cysteinyl-[cysteine desulfurase] + A + AMP + diphosphate + H(+). The protein operates within tRNA modification. In terms of biological role, catalyzes the ATP-dependent 2-thiolation of cytidine in position 32 of tRNA, to form 2-thiocytidine (s(2)C32). The sulfur atoms are provided by the cysteine/cysteine desulfurase (IscS) system. In Klebsiella pneumoniae (strain 342), this protein is tRNA-cytidine(32) 2-sulfurtransferase.